Reading from the N-terminus, the 714-residue chain is Cadherin-13 (714 aa).

The N-terminal stretch at 1 to 22 (MQPRTPLTLCVLLSQVLLVTSA) is a signal peptide. Positions 23 to 138 (DDLECTPGFQ…RTSPVPRQKR (116 aa)) are excised as a propeptide. 5 consecutive Cadherin domains span residues 143–245 (SPIL…RPIF), 246–363 (REGP…SPKF), 364–477 (TKKE…GPVF), 478–585 (YPDP…APVI), and 586–680 (YPTV…VQVC). A disordered region spans residues 156 to 183 (PRDVGKVVDSDRPEGSKFRLTGKGVDQD). Over residues 158–172 (DVGKVVDSDRPEGSK) the composition is skewed to basic and acidic residues. Residues Asn-382, Asn-489, Asn-500, Asn-530, Asn-598, Asn-638, and Asn-671 are each glycosylated (N-linked (GlcNAc...) asparagine). A lipid anchor (GPI-anchor amidated glycine) is attached at Gly-693. A propeptide spans 694-714 (ALHLSLSLLLLFSLLSLLSGL) (removed in mature form).

In terms of assembly, by contrast to classical cadherins, homodimerization in trans is not mediated by cadherin EC1 domain strand-swapping, but instead through a homophilic adhesive interface which joins two elongated EC1-EC2 domains through a region near their Ca2+-binding sites to form a tetrahedral, X-like shape.

It localises to the cell membrane. Its subcellular location is the cytoplasm. In terms of biological role, cadherins are calcium-dependent cell adhesion proteins. They preferentially interact with themselves in a homophilic manner in connecting cells; cadherins may thus contribute to the sorting of heterogeneous cell types. May act as a negative regulator of neural cell growth. The protein is Cadherin-13 (Cdh13) of Mus musculus (Mouse).